A 448-amino-acid polypeptide reads, in one-letter code: MEVSSSETLPILWRTSPPSNDYENARCRVFNGRQPEHFPLAIVKANKVEHIVAAVKLAAELDACIAVRSGGHSLSCWTIRHGAILIDLEDYQHLSYDDEIHEVQASPSTLGADLLTFLAKKKRFFPVGHSGDIGLGGYLLQGGIGLNSRGYGYACEYITGLDIITADGEIKHCDKTENSDLYWAARGAGPEFPAIVIRFFLKTCPLLPVCKRSRYVWPAAMYGKVFKWLEELLNSLSEDVEIAVFGFVLPRLNQPGLVLHATAFGDSSENVREKLTPIIKNHPPGTFLAEDFVSTNFPEDYDLGKDTMPRGARYFTDSVFLKPGIDFVATCKGMFTELKHPRALAYWQPMKTNIDRILPDMAMSIHSHHYVSLLAIYEDPSEDQQQISWIIDRMKSLEPAILGTFIGDAHPVERPSNYWSEEAEERVITIGRKWDPSSRIRGIVLSDA.

One can recognise an FAD-binding PCMH-type domain in the interval 35-206 (PEHFPLAIVK…IRFFLKTCPL (172 aa)).

Belongs to the oxygen-dependent FAD-linked oxidoreductase family. Requires FAD as cofactor.

It functions in the pathway secondary metabolite biosynthesis. Functionally, FAD-linked oxidoreductase; part of the gene cluster that mediates the biosynthesis of the indole diterpenes nodulisporic acids (NA). Nodulisporic acid A (NAA) and its chemically modified derivatives are of particular significance because of their highly potent insecticidal activity against blood-feeding arthropods and lack of observable adverse effects on mammals, in particular the tremogenicity associated with the paspaline-derived IDTs is not observed. The geranylgeranyl diphosphate (GGPP) synthase ggs1, localized outside of the cluster, is proposed to catalyze the first step in nodulisporic acid biosynthesis via conversion of farnesyl pyrophosphate and isopentyl pyrophosphate into geranylgeranyl pyrophosphate (GGPP). Condensation of indole-3-glycerol phosphate with GGPP by the prenyl transferase nodC then forms 3-geranylgeranylindole (3-GGI). Epoxidation by the FAD-dependent monooxygenase nodM leads to a single-epoxidized-GGI that is substrate of the terpene cyclase nodB for cyclization to yield emindole SB. The terminal methyl carbon, C28, of emindole SB is then oxidized by the cytochrome P450 monooxygenase nodW to produce nodulisporic acid F (NAF), the pentacyclic core of NAA. NAF is converted to nodulisporic acid E (NAE) via prenylation. This step is probably performed by one of the indole diterpene prenyltransferases nodD1 or nodD2. Several oxidation steps performed by the FAD-linked oxidoreductase nodO and one of the cytochrome P450 monooxygenase nodR, nodX or nodZ further convert NAE to nodulisporic acid D (NAD). NAD is substrate of cytochrome P450 monooxygenase nodJ to produce the precursor of nodulisporic acid C (NAC), converted to NAC by one of the indole diterpene prenyltransferases nodD1 or nodD2. The FAD-dependent monooxygenase nodY2 then oxidizes NAC to nodulisporic acid B (NAB). Finally NAB is converted to NAA by one of the cytochrome P450 monooxygenases nodR, nodX or nodZ. This chain is FAD-linked oxidoreductase nodO, found in Hypoxylon pulicicidum.